Here is a 301-residue protein sequence, read N- to C-terminus: Fluoroquinolones export ATP-binding protein MT2762 (301 aa).

The ABC transporter domain occupies Ile18 to Tyr246. Gly52–Ser59 lines the ATP pocket.

Belongs to the ABC transporter superfamily. As to quaternary structure, the complex is composed of 2 ATP-binding proteins and 2 transmembrane proteins.

It is found in the cell membrane. In terms of biological role, part of the ABC transporter complex involved in fluoroquinolones export. Probably responsible for energy coupling to the transport system. This chain is Fluoroquinolones export ATP-binding protein MT2762, found in Mycobacterium tuberculosis (strain CDC 1551 / Oshkosh).